The following is a 180-amino-acid chain: O-acetyl-ADP-ribose deacetylase (180 aa).

Positions 1–175 constitute a Macro domain; the sequence is MKPQIDVIHG…LYQRLLTQRG (175 aa). Substrate is bound by residues 11–12, N25, 33–35, and 122–126; these read DI, GVD, and STGVY. The active-site Proton acceptor is the D35.

This sequence belongs to the MacroD-type family. YmdB subfamily. In terms of assembly, homodimer. Interacts with RNase III.

It carries out the reaction 3''-O-acetyl-ADP-D-ribose + H2O = ADP-D-ribose + acetate + H(+). It catalyses the reaction 2''-O-acetyl-ADP-D-ribose + H2O = ADP-D-ribose + acetate + H(+). Its function is as follows. Deacetylates O-acetyl-ADP ribose to yield ADP-ribose and free acetate. Down-regulates ribonuclease 3 (RNase III) activity. Acts by interacting directly with the region of the ribonuclease that is required for dimerization/activation. In Enterobacter cloacae subsp. cloacae (strain ATCC 13047 / DSM 30054 / NBRC 13535 / NCTC 10005 / WDCM 00083 / NCDC 279-56), this protein is O-acetyl-ADP-ribose deacetylase.